The sequence spans 404 residues: Tryptophan synthase beta chain (404 aa).

Lysine 94 is modified (N6-(pyridoxal phosphate)lysine).

It belongs to the TrpB family. As to quaternary structure, tetramer of two alpha and two beta chains. The cofactor is pyridoxal 5'-phosphate.

The enzyme catalyses (1S,2R)-1-C-(indol-3-yl)glycerol 3-phosphate + L-serine = D-glyceraldehyde 3-phosphate + L-tryptophan + H2O. It participates in amino-acid biosynthesis; L-tryptophan biosynthesis; L-tryptophan from chorismate: step 5/5. In terms of biological role, the beta subunit is responsible for the synthesis of L-tryptophan from indole and L-serine. This chain is Tryptophan synthase beta chain, found in Staphylococcus aureus (strain USA300).